A 66-amino-acid polypeptide reads, in one-letter code: Beta-mammal toxin Cv1 (66 aa).

Residues 1–66 enclose the LCN-type CS-alpha/beta domain; that stretch reads KEGYIVNLST…VWPLPKKTCN (66 aa). 4 disulfide bridges follow: cysteine 12–cysteine 65, cysteine 16–cysteine 41, cysteine 25–cysteine 46, and cysteine 29–cysteine 48.

Expressed by the venom gland.

Its subcellular location is the secreted. With respect to regulation, is susceptible to be neutralized by human antibodies scFvs 10FG2 and HV. Its function is as follows. Beta toxins bind voltage-independently at site-4 of sodium channels (Nav) and reduces peak current and shifts the voltage of activation toward more negative potentials thereby affecting sodium channel activation and promoting spontaneous and repetitive firing. This toxin is slightly toxic to mice. This is Beta-mammal toxin Cv1 from Centruroides villegasi (Scorpion).